Reading from the N-terminus, the 258-residue chain is Proteasome subunit alpha (258 aa).

Belongs to the peptidase T1A family. In terms of assembly, the 20S proteasome core is composed of 14 alpha and 14 beta subunits that assemble into four stacked heptameric rings, resulting in a barrel-shaped structure. The two inner rings, each composed of seven catalytic beta subunits, are sandwiched by two outer rings, each composed of seven alpha subunits. The catalytic chamber with the active sites is on the inside of the barrel. Has a gated structure, the ends of the cylinder being occluded by the N-termini of the alpha-subunits. Is capped by the proteasome-associated ATPase, ARC.

It localises to the cytoplasm. It participates in protein degradation; proteasomal Pup-dependent pathway. Its activity is regulated as follows. The formation of the proteasomal ATPase ARC-20S proteasome complex, likely via the docking of the C-termini of ARC into the intersubunit pockets in the alpha-rings, may trigger opening of the gate for substrate entry. Interconversion between the open-gate and close-gate conformations leads to a dynamic regulation of the 20S proteasome proteolysis activity. Functionally, component of the proteasome core, a large protease complex with broad specificity involved in protein degradation. The protein is Proteasome subunit alpha of Nocardia farcinica (strain IFM 10152).